A 458-amino-acid chain; its full sequence is Aldehyde dehydrogenase (458 aa).

Residues 134-135 (WN), 158-161 (KHAS), and 210-211 (GS) each bind NADP(+). Glu-232 functions as the Proton acceptor in the catalytic mechanism. An NADP(+)-binding site is contributed by Leu-233. Cys-266 serves as the catalytic Nucleophile. Glu-363 serves as a coordination point for NADP(+).

This sequence belongs to the aldehyde dehydrogenase family. Monomer.

The catalysed reaction is an aldehyde + NAD(+) + H2O = a carboxylate + NADH + 2 H(+). It catalyses the reaction an aldehyde + NADP(+) + H2O = a carboxylate + NADPH + 2 H(+). It functions in the pathway carbohydrate metabolism; D-xylose degradation. Its function is as follows. Aldehyde dehydrogenase able to oxidize various aldehydes such as formaldehyde, glyceraldehyde, butyraldehyde, glutaraldehyde and benzaldehyde (in vitro). Is likely involved in the oxidative D-xylose degradation pathway, catalyzing the oxidation step of 2-oxoglutarate semialdehyde to 2-oxoglutarate. Is able to use both NAD(+) and NADP(+); however, shows a preference for NADP(+). Does not display succinate semialdehyde dehydrogenase activity. This Paenarthrobacter nicotinovorans (Arthrobacter nicotinovorans) protein is Aldehyde dehydrogenase (aldh).